The following is a 203-amino-acid chain: Proteasome subunit beta 2 (203 aa).

The propeptide at 1-10 (MNLQNKILKG) is removed in mature form; by autocatalysis. The Nucleophile role is filled by Thr11.

Belongs to the peptidase T1B family. The 20S proteasome core is composed of 14 alpha and 14 beta subunits that assemble into four stacked heptameric rings, resulting in a barrel-shaped structure. The two inner rings, each composed of seven catalytic beta subunits, are sandwiched by two outer rings, each composed of seven alpha subunits. The catalytic chamber with the active sites is on the inside of the barrel. Has a gated structure, the ends of the cylinder being occluded by the N-termini of the alpha-subunits. Is capped at one or both ends by the proteasome regulatory ATPase, PAN.

Its subcellular location is the cytoplasm. It catalyses the reaction Cleavage of peptide bonds with very broad specificity.. Its activity is regulated as follows. The formation of the proteasomal ATPase PAN-20S proteasome complex, via the docking of the C-termini of PAN into the intersubunit pockets in the alpha-rings, triggers opening of the gate for substrate entry. Interconversion between the open-gate and close-gate conformations leads to a dynamic regulation of the 20S proteasome proteolysis activity. Functionally, component of the proteasome core, a large protease complex with broad specificity involved in protein degradation. The polypeptide is Proteasome subunit beta 2 (Sulfolobus acidocaldarius (strain ATCC 33909 / DSM 639 / JCM 8929 / NBRC 15157 / NCIMB 11770)).